Consider the following 82-residue polypeptide: Precursor of CEP3 (82 aa).

Positions 1–24 are cleaved as a signal peptide; that stretch reads MATINVYVFAFIFLLTISVGSIEG. The propeptide occupies 25 to 63; the sequence is RKLTKFTVTTSEEIRAGGSVLSSSPPTEPLESPPSHGVD. Residues 40 to 82 are disordered; that stretch reads AGGSVLSSSPPTEPLESPPSHGVDTFRPTEPGHSPGIGHSVHN. 3 positions are modified to hydroxyproline: Pro-67, Pro-70, and Pro-74. Residues 79-82 constitute a propeptide that is removed on maturation; sequence SVHN.

The protein belongs to the C-terminally encoded plant signaling peptide (CEP) family. In terms of assembly, interacts with the CEP receptor CEPR1. In terms of processing, the mature small signaling peptide is generated by proteolytic processing of the longer precursor. As to expression, mostly expressed in roots. Present in lateral roots (especially in vasculature), root-hypocotyl junction and cotyledons.

It localises to the secreted. It is found in the extracellular space. Its subcellular location is the apoplast. Functionally, extracellular signaling peptide that represses primary root growth rate and significantly inhibits lateral root formation. Promotes shoot growth. Modulates leaf morphology. Regulates systemic nitrogen (N)-demand signaling. Mediates systemic up-regulation of genes involved in N uptake and assimilation pathways. This Arabidopsis thaliana (Mouse-ear cress) protein is Precursor of CEP3.